Consider the following 95-residue polypeptide: UPF0213 protein ESA_03545 (95 aa).

A GIY-YIG domain is found at Glu2 to Gln77.

The protein belongs to the UPF0213 family.

In Cronobacter sakazakii (strain ATCC BAA-894) (Enterobacter sakazakii), this protein is UPF0213 protein ESA_03545.